The primary structure comprises 868 residues: Translation initiation factor IF-2 (868 aa).

Over residues 103–183 the composition is skewed to basic and acidic residues; it reads RSELPETSDR…RQAAAERETV (81 aa). Positions 103–274 are disordered; the sequence is RSELPETSDR…GRPMLMPEQK (172 aa). Positions 190–207 are enriched in pro residues; it reads VAAPPIPRPAPEPRPPAR. Positions 213–254 are enriched in basic and acidic residues; the sequence is PKAEAPRAHPAERETEARGDKRSAGLSRKDEYRELQGDDFRK. The span at 255-264 shows a compositional bias: basic residues; it reads GGGKRKKPKT. Residues 369 to 538 enclose the tr-type G domain; that stretch reads PRPPVVTIMG…LVQAEVLELK (170 aa). Positions 378–385 are G1; sequence GHVDHGKT. Residue 378-385 participates in GTP binding; it reads GHVDHGKT. The interval 403–407 is G2; sequence GITQH. The segment at 424 to 427 is G3; it reads DTPG. GTP-binding positions include 424–428 and 478–481; these read DTPGH and NKMD. The tract at residues 478 to 481 is G4; sequence NKMD. Residues 514–516 are G5; the sequence is SAK.

It belongs to the TRAFAC class translation factor GTPase superfamily. Classic translation factor GTPase family. IF-2 subfamily.

The protein resides in the cytoplasm. One of the essential components for the initiation of protein synthesis. Protects formylmethionyl-tRNA from spontaneous hydrolysis and promotes its binding to the 30S ribosomal subunits. Also involved in the hydrolysis of GTP during the formation of the 70S ribosomal complex. The chain is Translation initiation factor IF-2 from Methylococcus capsulatus (strain ATCC 33009 / NCIMB 11132 / Bath).